Consider the following 139-residue polypeptide: Dehydrin DHN1 (139 aa).

The tract at residues 1 to 139 (MEYQGQHGHA…IKEKLPGGQH (139 aa)) is disordered. Positions 23 to 42 (GHGGFTGGPTGTHGAAGVGG) are enriched in gly residues. Basic and acidic residues predominate over residues 49 to 58 (RDGHKTDGVL). Residues 59–68 (RRSGSSSSSS) show a composition bias toward low complexity. The segment covering 83–98 (KEKIKEKLPGGAHKDA) has biased composition (basic and acidic residues). Residues 99–109 (AGQQQQTAMAG) show a composition bias toward low complexity. Residues 120–139 (TGEKKGVMDKIKEKLPGGQH) show a composition bias toward basic and acidic residues.

Belongs to the plant dehydrin family.

In Hordeum vulgare (Barley), this protein is Dehydrin DHN1 (DHN1).